The primary structure comprises 261 residues: Urease accessory protein UreD (261 aa).

Belongs to the UreD family. As to quaternary structure, ureD, UreF and UreG form a complex that acts as a GTP-hydrolysis-dependent molecular chaperone, activating the urease apoprotein by helping to assemble the nickel containing metallocenter of UreC. The UreE protein probably delivers the nickel.

Its subcellular location is the cytoplasm. In terms of biological role, required for maturation of urease via the functional incorporation of the urease nickel metallocenter. In Haemophilus influenzae (strain ATCC 51907 / DSM 11121 / KW20 / Rd), this protein is Urease accessory protein UreD.